The following is a 95-amino-acid chain: Putative septation protein SpoVG (95 aa).

This sequence belongs to the SpoVG family.

Its function is as follows. Could be involved in septation. The chain is Putative septation protein SpoVG from Brevibacillus brevis (strain 47 / JCM 6285 / NBRC 100599).